A 208-amino-acid chain; its full sequence is Uracil phosphoribosyltransferase (208 aa).

5-phospho-alpha-D-ribose 1-diphosphate-binding positions include Arg78, Arg103, and 130–138 (DPMLATGGS). Residues Ile193 and 198 to 200 (GDA) contribute to the uracil site. Asp199 serves as a coordination point for 5-phospho-alpha-D-ribose 1-diphosphate.

This sequence belongs to the UPRTase family. It depends on Mg(2+) as a cofactor.

It catalyses the reaction UMP + diphosphate = 5-phospho-alpha-D-ribose 1-diphosphate + uracil. It functions in the pathway pyrimidine metabolism; UMP biosynthesis via salvage pathway; UMP from uracil: step 1/1. Allosterically activated by GTP. Its function is as follows. Catalyzes the conversion of uracil and 5-phospho-alpha-D-ribose 1-diphosphate (PRPP) to UMP and diphosphate. This is Uracil phosphoribosyltransferase from Pectobacterium carotovorum subsp. carotovorum (strain PC1).